The chain runs to 406 residues: Probable endo-xylogalacturonan hydrolase A (406 aa).

A signal peptide spans 1-18 (MLYYRNLALLSLLSLSSA). 4 PbH1 repeats span residues 183–213 (AKDV…DIGS), 214–235 (STHV…ALKP), 237–257 (CNYV…SVGS), and 299–320 (VKNV…QIQS). Asp228 serves as the catalytic Proton donor. The N-linked (GlcNAc...) asparagine glycan is linked to Asn244. The active site involves His251. Asn301 carries an N-linked (GlcNAc...) asparagine glycan.

Belongs to the glycosyl hydrolase 28 family.

The protein resides in the secreted. Functionally, pectinolytic enzyme involved in the degradation of xylogalacturonan (xga), a galacturonan backbone heavily substituted with xylose, and which is one important component of the hairy regions of pectin. Activity requires a galacturonic acid backbone substituted with xylose. This chain is Probable endo-xylogalacturonan hydrolase A (xghA), found in Neosartorya fischeri (strain ATCC 1020 / DSM 3700 / CBS 544.65 / FGSC A1164 / JCM 1740 / NRRL 181 / WB 181) (Aspergillus fischerianus).